Reading from the N-terminus, the 631-residue chain is Fatty acid ABC transporter ATP-binding/permease protein (631 aa).

Residues 1 to 11 show a composition bias toward low complexity; it reads MTAPPGARPRA. The disordered stretch occupies residues 1–20; that stretch reads MTAPPGARPRAASPPPNMRS. The next 3 helical transmembrane spans lie at 42-62, 123-143, and 205-225; these read IAVITLGIAGTTIGVIVPRIL, LALALALYLAAALMIWAQARL, and ILTMVAVLAMMVSISGLLALI. The region spanning 42–365 is the ABC transmembrane type-1 domain; sequence IAVITLGIAG…LAGMYNALQS (324 aa). One can recognise an ABC transporter domain in the interval 397 to 631; that stretch reads VEFEHVNFAY…RGVYYQMTRA (235 aa). 430–437 contributes to the ATP binding site; the sequence is GPTGAGKT.

Belongs to the ABC transporter superfamily. Lipid exporter (TC 3.A.1.106) family.

It is found in the cell inner membrane. ABC transporter involved in fatty acid import. Transmembrane domains (TMD) form a pore in the membrane and the ATP-binding domain (NBD) is responsible for energy generation. The chain is Fatty acid ABC transporter ATP-binding/permease protein from Mycobacterium bovis (strain ATCC BAA-935 / AF2122/97).